The primary structure comprises 359 residues: Membrane-bound lytic murein transglycosylase C (359 aa).

The signal sequence occupies residues 1-16; that stretch reads MKKYLALALIAPLLIS. Residue cysteine 17 is the site of N-palmitoyl cysteine attachment. Cysteine 17 is lipidated: S-diacylglycerol cysteine.

Belongs to the transglycosylase Slt family.

Its subcellular location is the cell outer membrane. The catalysed reaction is Exolytic cleavage of the (1-&gt;4)-beta-glycosidic linkage between N-acetylmuramic acid (MurNAc) and N-acetylglucosamine (GlcNAc) residues in peptidoglycan, from either the reducing or the non-reducing ends of the peptidoglycan chains, with concomitant formation of a 1,6-anhydrobond in the MurNAc residue.. Murein-degrading enzyme. May play a role in recycling of muropeptides during cell elongation and/or cell division. The chain is Membrane-bound lytic murein transglycosylase C from Shigella sonnei (strain Ss046).